Here is a 259-residue protein sequence, read N- to C-terminus: 5'-nucleotidase SurE (259 aa).

The a divalent metal cation site is built by Asp8, Asp9, Ser39, and Asn95.

The protein belongs to the SurE nucleotidase family. A divalent metal cation is required as a cofactor.

Its subcellular location is the cytoplasm. It carries out the reaction a ribonucleoside 5'-phosphate + H2O = a ribonucleoside + phosphate. In terms of biological role, nucleotidase that shows phosphatase activity on nucleoside 5'-monophosphates. This Pseudothermotoga lettingae (strain ATCC BAA-301 / DSM 14385 / NBRC 107922 / TMO) (Thermotoga lettingae) protein is 5'-nucleotidase SurE.